The following is a 657-amino-acid chain: Threonine--tRNA ligase (657 aa).

In terms of domain architecture, TGS spans 7–70 (QQASIAITLP…LCDANIEIVT (64 aa)). Positions 253–555 (DHRKLGTELE…LIEHTAGNFP (303 aa)) are catalytic. C351, H402, and H532 together coordinate Zn(2+).

It belongs to the class-II aminoacyl-tRNA synthetase family. In terms of assembly, homodimer. Zn(2+) is required as a cofactor.

Its subcellular location is the cytoplasm. The catalysed reaction is tRNA(Thr) + L-threonine + ATP = L-threonyl-tRNA(Thr) + AMP + diphosphate + H(+). Its function is as follows. Catalyzes the attachment of threonine to tRNA(Thr) in a two-step reaction: L-threonine is first activated by ATP to form Thr-AMP and then transferred to the acceptor end of tRNA(Thr). Also edits incorrectly charged L-seryl-tRNA(Thr). In Chlorobium limicola (strain DSM 245 / NBRC 103803 / 6330), this protein is Threonine--tRNA ligase.